Consider the following 341-residue polypeptide: Methionine import ATP-binding protein MetN 1 (341 aa).

The 240-residue stretch at 2–241 folds into the ABC transporter domain; it reads IEFKNVNKVF…PQTNTAKNFV (240 aa). 38-45 serves as a coordination point for ATP; that stretch reads GYSGAGKS.

This sequence belongs to the ABC transporter superfamily. Methionine importer (TC 3.A.1.24) family. As to quaternary structure, the complex is composed of two ATP-binding proteins (MetN), two transmembrane proteins (MetI) and a solute-binding protein (MetQ).

Its subcellular location is the cell membrane. It carries out the reaction L-methionine(out) + ATP + H2O = L-methionine(in) + ADP + phosphate + H(+). The enzyme catalyses D-methionine(out) + ATP + H2O = D-methionine(in) + ADP + phosphate + H(+). Functionally, part of the ABC transporter complex MetNIQ involved in methionine import. Responsible for energy coupling to the transport system. This is Methionine import ATP-binding protein MetN 1 from Staphylococcus epidermidis (strain ATCC 35984 / DSM 28319 / BCRC 17069 / CCUG 31568 / BM 3577 / RP62A).